The sequence spans 109 residues: Tetracenomycin F2 cyclase (109 aa).

Homodimer.

The catalysed reaction is tetracenomycin F2 + H(+) = tetracenomycin F1 + H2O. It participates in antibiotic biosynthesis; tetracenomycin C biosynthesis. Functionally, catalyzing the conversion of tetracenomycin F2 to tetracenomycin F1. The polypeptide is Tetracenomycin F2 cyclase (tcmI) (Streptomyces glaucescens).